The following is a 949-amino-acid chain: MAM domain-containing glycosylphosphatidylinositol anchor protein 2 (949 aa).

The signal sequence occupies residues Met1–Ala25. Ig-like domains follow at residues Pro27–Asp127 and Pro134–Ser232. 2 disulfides stabilise this stretch: Cys62-Cys110 and Cys159-Cys216. N-linked (GlcNAc...) asparagine glycans are attached at residues Asn92, Asn213, and Asn237. Ig-like domains lie at Pro242–Val328, Pro340–Ser436, Pro442–Gln533, and Pro540–Thr627. Cystine bridges form between Cys264/Cys310 and Cys359/Cys417. N-linked (GlcNAc...) asparagine glycosylation is found at Asn434, Asn443, Asn504, Asn610, and Asn703. Cystine bridges form between Cys465-Cys515 and Cys561-Cys611. The Fibronectin type-III domain maps to Asp638–Glu738. The 176-residue stretch at Phe739 to Lys914 folds into the MAM domain. Asp924 carries the GPI-anchor amidated aspartate lipid modification. The propeptide at Gly925 to Arg949 is removed in mature form.

Interacts (through the Ig-like domains) with NLGN2.

The protein resides in the cell membrane. Functionally, may be involved in cell-cell interactions. The polypeptide is MAM domain-containing glycosylphosphatidylinositol anchor protein 2 (Mdga2) (Mus musculus (Mouse)).